The primary structure comprises 437 residues: Beta-1,3-galactosyl-O-glycosyl-glycoprotein beta-1,6-N-acetylglucosaminyltransferase 3 (437 aa).

The Cytoplasmic segment spans residues 1 to 12; the sequence is MTSWQRLCWHYR. Residues 13-30 form a helical; Signal-anchor for type II membrane protein membrane-spanning segment; it reads LWTLGCYMLLAILALKLS. The Lumenal segment spans residues 31 to 437; it reads LRLKCDFDAM…RHKAIYGTEL (407 aa). 4 disulfides stabilise this stretch: Cys70–Cys227, Cys161–Cys381, Cys182–Cys209, and Cys390–Cys422. An N-linked (GlcNAc...) asparagine glycan is attached at Asn288.

This sequence belongs to the glycosyltransferase 14 family. In terms of processing, N-glycosylated.

It is found in the golgi apparatus membrane. It catalyses the reaction a 3-O-[beta-D-galactosyl-(1-&gt;3)-N-acetyl-alpha-D-galactosaminyl]-L-seryl-[protein] + UDP-N-acetyl-alpha-D-glucosamine = 3-O-{beta-D-galactosyl-(1-&gt;3)-[N-acetyl-beta-D-glucosaminyl-(1-&gt;6)]-N-acetyl-alpha-D-galactosaminyl}-L-seryl-[protein] + UDP + H(+). The catalysed reaction is a 3-O-[beta-D-galactosyl-(1-&gt;3)-N-acetyl-alpha-D-galactosaminyl]-L-threonyl-[protein] + UDP-N-acetyl-alpha-D-glucosamine = a 3-O-{beta-D-galactosyl-(1-&gt;3)-[N-acetyl-beta-D-glucosaminyl-(1-&gt;6)]-N-acetyl-alpha-D-galactosaminyl}-L-threonyl-[protein] + UDP + H(+). The enzyme catalyses a beta-D-Gal-(1-&gt;4)-beta-D-GlcNAc-(1-&gt;3)-beta-D-Gal-(1-&gt;4)-beta-D-GlcNAc derivative + UDP-N-acetyl-alpha-D-glucosamine = a beta-D-Gal-(1-&gt;4)-beta-D-GlcNAc-(1-&gt;3)-[beta-D-GlcNAc-(1-&gt;6)]-beta-D-Gal-(1-&gt;4)-N-acetyl-beta-D-glucosaminyl derivative + UDP + H(+). It carries out the reaction 3-O-[N-acetyl-beta-D-glucosaminyl-(1-&gt;3)-N-acetyl-alpha-D-galactosaminyl]-L-seryl-[protein] + UDP-N-acetyl-alpha-D-glucosamine = 3-O-[N-acetyl-beta-D-glucosaminyl-(1-&gt;3)-[N-acetyl-beta-D-glucosaminyl-(1-&gt;6)]-N-acetyl-alpha-D-galactosaminyl]-L-seryl-[protein] + UDP + H(+). It catalyses the reaction a 3-O-[N-acetyl-beta-D-glucosaminyl-(1-&gt;3)-N-acetyl-alpha-D-galactosaminyl]-L-threonyl-[protein] + UDP-N-acetyl-alpha-D-glucosamine = 3-O-[N-acetyl-beta-D-glucosaminyl-(1-&gt;3)-[N-acetyl-beta-D-glucosaminyl-(1-&gt;6)]-N-acetyl-alpha-D-galactosaminyl]-L-threonyl-[protein] + UDP + H(+). The protein operates within protein modification; protein glycosylation. Functionally, glycosyltransferase that can synthesize all known mucin beta 6 N-acetylglucosaminides. Mediates core 2 and core 4 O-glycan branching, 2 important steps in mucin-type biosynthesis. Also has I-branching enzyme activity by converting linear into branched poly-N-acetyllactosaminoglycans, leading to introduce the blood group I antigen during embryonic development. This Mus musculus (Mouse) protein is Beta-1,3-galactosyl-O-glycosyl-glycoprotein beta-1,6-N-acetylglucosaminyltransferase 3 (Gcnt3).